Here is a 160-residue protein sequence, read N- to C-terminus: Cytochrome b6-f complex subunit 4 (160 aa).

3 consecutive transmembrane segments (helical) span residues 36-56 (LLYI…GLAV), 95-115 (LLGV…PFLE), and 131-151 (TVFL…TLPI).

It belongs to the cytochrome b family. PetD subfamily. As to quaternary structure, the 4 large subunits of the cytochrome b6-f complex are cytochrome b6, subunit IV (17 kDa polypeptide, petD), cytochrome f and the Rieske protein, while the 4 small subunits are petG, petL, petM and petN. The complex functions as a dimer.

The protein resides in the plastid. The protein localises to the chloroplast thylakoid membrane. Component of the cytochrome b6-f complex, which mediates electron transfer between photosystem II (PSII) and photosystem I (PSI), cyclic electron flow around PSI, and state transitions. This is Cytochrome b6-f complex subunit 4 from Amborella trichopoda.